The sequence spans 123 residues: Unclassified hydrophobin 9 (123 aa).

The first 24 residues, 1 to 24, serve as a signal peptide directing secretion; sequence MFFFNTKPIVFLVVLSVVATFAAA. 4 disulfides stabilise this stretch: C37–C103, C45–C97, C46–C88, and C104–C117.

Belongs to the fungal hydrophobin family. In terms of assembly, self-assembles to form functional amyloid fibrils called rodlets. Self-assembly into fibrillar rodlets occurs spontaneously at hydrophobic:hydrophilic interfaces and the rodlets further associate laterally to form amphipathic monolayers.

Its subcellular location is the secreted. It is found in the cell wall. Functionally, aerial growth, conidiation, and dispersal of filamentous fungi in the environment rely upon a capability of their secreting small amphipathic proteins called hydrophobins (HPBs) with low sequence identity. Class I can self-assemble into an outermost layer of rodlet bundles on aerial cell surfaces, conferring cellular hydrophobicity that supports fungal growth, development and dispersal; whereas Class II form highly ordered films at water-air interfaces through intermolecular interactions but contribute nothing to the rodlet structure. In Pleurotus ostreatus (strain PC15) (Oyster mushroom), this protein is Unclassified hydrophobin 9.